We begin with the raw amino-acid sequence, 208 residues long: Uracil phosphoribosyltransferase (208 aa).

5-phospho-alpha-D-ribose 1-diphosphate-binding positions include Arg78, Arg103, and 130-138 (DPMLATGGS). Residues Ile193 and 198–200 (GDA) contribute to the uracil site. Asp199 provides a ligand contact to 5-phospho-alpha-D-ribose 1-diphosphate.

It belongs to the UPRTase family. Mg(2+) is required as a cofactor.

The enzyme catalyses UMP + diphosphate = 5-phospho-alpha-D-ribose 1-diphosphate + uracil. Its pathway is pyrimidine metabolism; UMP biosynthesis via salvage pathway; UMP from uracil: step 1/1. Allosterically activated by GTP. Catalyzes the conversion of uracil and 5-phospho-alpha-D-ribose 1-diphosphate (PRPP) to UMP and diphosphate. In Vibrio parahaemolyticus serotype O3:K6 (strain RIMD 2210633), this protein is Uracil phosphoribosyltransferase.